The following is a 445-amino-acid chain: CBL-interacting protein kinase 3 (445 aa).

The 256-residue stretch at 19-274 folds into the Protein kinase domain; that stretch reads YELGRAIGQG…TSQVLQDQWF (256 aa). ATP-binding positions include 25 to 33 and Lys-48; that span reads IGQGTFAKV. The active-site Proton acceptor is Asp-142. The tract at residues 160–189 is activation loop; that stretch reads DFGLSAISEQVKADGLLHTTCGTPNYVAPE. In terms of domain architecture, NAF spans 309 to 336; it reads AMEEQPTLMNAFELISLNKGLNLDNFFE. Positions 342–371 are PPI; that stretch reads KRETRFTSQCPPKEIINRIEEAANLLGFNI.

This sequence belongs to the protein kinase superfamily. CAMK Ser/Thr protein kinase family. SNF1 subfamily. Mn(2+) is required as a cofactor.

The enzyme catalyses L-seryl-[protein] + ATP = O-phospho-L-seryl-[protein] + ADP + H(+). The catalysed reaction is L-threonyl-[protein] + ATP = O-phospho-L-threonyl-[protein] + ADP + H(+). CIPK serine-threonine protein kinases interact with CBL proteins. Binding of a CBL protein to the regulatory NAF domain of CIPK protein lead to the activation of the kinase in a calcium-dependent manner. The protein is CBL-interacting protein kinase 3 (CIPK3) of Oryza sativa subsp. japonica (Rice).